The chain runs to 371 residues: Cytoplasmic dynein intermediate light chain DYN3 (371 aa).

It belongs to the dynein light intermediate chain DYN3 family. As to quaternary structure, the cytoplasmic dynein is composed of at least two heavy chains and a number of intermediate and light chains.

It is found in the cytoplasm. Its subcellular location is the cytoskeleton. Component of the cytoplasmic dynein which acts as a motor for the intracellular retrograde motility of vesicles and organelles along microtubules. May play an important role in the proper orientation of the mitotic spindle into the budding daughter cell yeast. Probably required for normal progression of the cell cycle. In Eremothecium gossypii (strain ATCC 10895 / CBS 109.51 / FGSC 9923 / NRRL Y-1056) (Yeast), this protein is Cytoplasmic dynein intermediate light chain DYN3 (DYN3).